Consider the following 366-residue polypeptide: Methylthioribose-1-phosphate isomerase (366 aa).

Substrate is bound by residues 53–55, R90, and Q203; that span reads RGA. D244 acts as the Proton donor in catalysis. 254–255 contacts substrate; sequence NK.

The protein belongs to the eIF-2B alpha/beta/delta subunits family. MtnA subfamily.

It catalyses the reaction 5-(methylsulfanyl)-alpha-D-ribose 1-phosphate = 5-(methylsulfanyl)-D-ribulose 1-phosphate. The protein operates within amino-acid biosynthesis; L-methionine biosynthesis via salvage pathway; L-methionine from S-methyl-5-thio-alpha-D-ribose 1-phosphate: step 1/6. In terms of biological role, catalyzes the interconversion of methylthioribose-1-phosphate (MTR-1-P) into methylthioribulose-1-phosphate (MTRu-1-P). This Methylocella silvestris (strain DSM 15510 / CIP 108128 / LMG 27833 / NCIMB 13906 / BL2) protein is Methylthioribose-1-phosphate isomerase.